Reading from the N-terminus, the 177-residue chain is Interleukin-25 (177 aa).

The signal sequence occupies residues Met1 to Thr32. The disordered stretch occupies residues Pro58–Pro81. Residues Arg69–Glu78 show a composition bias toward basic and acidic residues. 2 disulfide bridges follow: Cys110–Cys168 and Cys115–Cys170. An N-linked (GlcNAc...) asparagine glycan is attached at Asn136.

It belongs to the IL-17 family. Expressed at low levels in several tissues, including brain, kidney, lung, prostate, testis, spinal cord, adrenal gland, and trachea.

The protein localises to the secreted. Cytokine produced by various cells such as eosinophils, T-helper type 2 (Th2) cells or epithelial cells that plays a role in internal safety of adaptive immune responses by regulating cytokine production. Promotes and augments T-helper type 2 responses locally or systemically. Exerts its activity via its receptor composed of IL17RA and IL17RB for signal transduction. In turn, stimulates the JAK2-STAT5A pathway and promotes the secretion of type-2 associated cytokines including IL4, IL9 and IL13. Also induces the release of IL8, and IL6 from eosinophils through the combined activation of MAPK and NF-kappa-B pathways. Inhibits the differentiation of T-helper (Th17) cells via the production of IL4, IL5 and IL13. The protein is Interleukin-25 (IL25) of Homo sapiens (Human).